Here is a 465-residue protein sequence, read N- to C-terminus: UDP-N-acetylglucosamine 1-carboxyvinyltransferase (465 aa).

Lysine 22–asparagine 23 provides a ligand contact to phosphoenolpyruvate. Arginine 94 lines the UDP-N-acetyl-alpha-D-glucosamine pocket. Cysteine 119 functions as the Proton donor in the catalytic mechanism. A 2-(S-cysteinyl)pyruvic acid O-phosphothioketal modification is found at cysteine 119. The UDP-N-acetyl-alpha-D-glucosamine site is built by aspartate 313 and valine 335.

The protein belongs to the EPSP synthase family. MurA subfamily.

It is found in the cytoplasm. The catalysed reaction is phosphoenolpyruvate + UDP-N-acetyl-alpha-D-glucosamine = UDP-N-acetyl-3-O-(1-carboxyvinyl)-alpha-D-glucosamine + phosphate. It participates in cell wall biogenesis; peptidoglycan biosynthesis. Its function is as follows. Cell wall formation. Adds enolpyruvyl to UDP-N-acetylglucosamine. This chain is UDP-N-acetylglucosamine 1-carboxyvinyltransferase, found in Protochlamydia amoebophila (strain UWE25).